Here is a 131-residue protein sequence, read N- to C-terminus: ATP synthase epsilon chain, chloroplastic (131 aa).

This sequence belongs to the ATPase epsilon chain family. F-type ATPases have 2 components, CF(1) - the catalytic core - and CF(0) - the membrane proton channel. CF(1) has five subunits: alpha(3), beta(3), gamma(1), delta(1), epsilon(1). CF(0) has three main subunits: a, b and c.

It is found in the plastid. It localises to the chloroplast thylakoid membrane. Produces ATP from ADP in the presence of a proton gradient across the membrane. This Guillardia theta (Cryptophyte) protein is ATP synthase epsilon chain, chloroplastic.